A 135-amino-acid polypeptide reads, in one-letter code: Ribonuclease VapC5 (135 aa).

The PINc domain maps to 9-130; sequence VLDTSVFIAT…FAALDGAASV (122 aa). Residues Asp11 and Asp100 each contribute to the Mg(2+) site.

The protein belongs to the PINc/VapC protein family. Forms a complex with VapB5. It depends on Mg(2+) as a cofactor.

It is found in the secreted. In terms of biological role, probable toxic component of a type II toxin-antitoxin (TA) system. The cognate antitoxin is VapB5. Has limited RNase activity on substrates; activity is seen with a VapC5-VapB5 complex. The chain is Ribonuclease VapC5 from Mycobacterium tuberculosis (strain ATCC 25618 / H37Rv).